We begin with the raw amino-acid sequence, 121 residues long: MSLKIRLARGGAKKRPYYRIVVADARSPRDGRFIEKIGTFNPLLAKDAAERVTLDTEKAKAWLEKGAQPTDRVARFLDAAGLLKREARNNPKKAEPGKKAQERAAERAAKAAEASEAASAE.

Positions 85-110 (REARNNPKKAEPGKKAQERAAERAAK) are enriched in basic and acidic residues. A disordered region spans residues 85-121 (REARNNPKKAEPGKKAQERAAERAAKAAEASEAASAE). The segment covering 111–121 (AAEASEAASAE) has biased composition (low complexity).

This sequence belongs to the bacterial ribosomal protein bS16 family.

The chain is Small ribosomal subunit protein bS16 from Azorhizobium caulinodans (strain ATCC 43989 / DSM 5975 / JCM 20966 / LMG 6465 / NBRC 14845 / NCIMB 13405 / ORS 571).